An 873-amino-acid chain; its full sequence is Alanine--tRNA ligase (873 aa).

Zn(2+) is bound by residues histidine 562, histidine 566, cysteine 664, and histidine 668.

Belongs to the class-II aminoacyl-tRNA synthetase family. It depends on Zn(2+) as a cofactor.

It is found in the cytoplasm. The catalysed reaction is tRNA(Ala) + L-alanine + ATP = L-alanyl-tRNA(Ala) + AMP + diphosphate. In terms of biological role, catalyzes the attachment of alanine to tRNA(Ala) in a two-step reaction: alanine is first activated by ATP to form Ala-AMP and then transferred to the acceptor end of tRNA(Ala). Also edits incorrectly charged Ser-tRNA(Ala) and Gly-tRNA(Ala) via its editing domain. This Photobacterium profundum (strain SS9) protein is Alanine--tRNA ligase.